The chain runs to 148 residues: uncharacterized protein (148 aa).

A helical transmembrane segment spans residues 7–29 (MLILMSLVKIVLTCLPTGVIEWL).

It localises to the membrane. This is an uncharacterized protein from Bacillus subtilis (strain 168).